Here is a 600-residue protein sequence, read N- to C-terminus: DNA mismatch repair protein MutL (600 aa).

It belongs to the DNA mismatch repair MutL/HexB family.

Functionally, this protein is involved in the repair of mismatches in DNA. It is required for dam-dependent methyl-directed DNA mismatch repair. May act as a 'molecular matchmaker', a protein that promotes the formation of a stable complex between two or more DNA-binding proteins in an ATP-dependent manner without itself being part of a final effector complex. This Sinorhizobium fredii (strain NBRC 101917 / NGR234) protein is DNA mismatch repair protein MutL.